The primary structure comprises 330 residues: Fructose-1,6-bisphosphatase class 1 (330 aa).

Mg(2+) contacts are provided by Glu-84, Asp-103, Leu-105, and Asp-106. Residues 106 to 109 (DGSS), Asn-196, and Lys-262 each bind substrate. Residue Glu-268 coordinates Mg(2+).

The protein belongs to the FBPase class 1 family. Homotetramer. It depends on Mg(2+) as a cofactor.

Its subcellular location is the cytoplasm. The catalysed reaction is beta-D-fructose 1,6-bisphosphate + H2O = beta-D-fructose 6-phosphate + phosphate. It functions in the pathway carbohydrate biosynthesis; gluconeogenesis. The chain is Fructose-1,6-bisphosphatase class 1 from Shewanella baltica (strain OS185).